A 176-amino-acid chain; its full sequence is Adenine phosphoribosyltransferase (176 aa).

Belongs to the purine/pyrimidine phosphoribosyltransferase family. As to quaternary structure, homodimer.

It localises to the cytoplasm. It carries out the reaction AMP + diphosphate = 5-phospho-alpha-D-ribose 1-diphosphate + adenine. It functions in the pathway purine metabolism; AMP biosynthesis via salvage pathway; AMP from adenine: step 1/1. Functionally, catalyzes a salvage reaction resulting in the formation of AMP, that is energically less costly than de novo synthesis. The protein is Adenine phosphoribosyltransferase of Bacteroides thetaiotaomicron (strain ATCC 29148 / DSM 2079 / JCM 5827 / CCUG 10774 / NCTC 10582 / VPI-5482 / E50).